A 1116-amino-acid chain; its full sequence is Protein translocase subunit SecA (1116 aa).

ATP is bound by residues Gln177, 195 to 199 (GEGKT), and Asp692.

It belongs to the SecA family. Monomer and homodimer. Part of the essential Sec protein translocation apparatus which comprises SecA, SecYEG and auxiliary proteins SecDF. Other proteins may also be involved.

The protein localises to the cell inner membrane. Its subcellular location is the cytoplasm. It carries out the reaction ATP + H2O + cellular proteinSide 1 = ADP + phosphate + cellular proteinSide 2.. Its function is as follows. Part of the Sec protein translocase complex. Interacts with the SecYEG preprotein conducting channel. Has a central role in coupling the hydrolysis of ATP to the transfer of proteins into and across the cell membrane, serving as an ATP-driven molecular motor driving the stepwise translocation of polypeptide chains across the membrane. The protein is Protein translocase subunit SecA of Flavobacterium psychrophilum (strain ATCC 49511 / DSM 21280 / CIP 103535 / JIP02/86).